Here is a 512-residue protein sequence, read N- to C-terminus: GTPase Obg (512 aa).

One can recognise an Obg domain in the interval 2–159; sequence ATFVDTVTLH…GDVVLELKVV (158 aa). The OBG-type G domain occupies 160-336; sequence ADVALVGYPS…LSFALAELVE (177 aa). GTP contacts are provided by residues 166-173, 191-195, 212-215, 288-291, and 317-319; these read GYPSAGKS, FTTLH, DVPG, NKID, and STV. The Mg(2+) site is built by Ser-173 and Thr-193. In terms of domain architecture, OCT spans 355-439; sequence PRAVNEKPFT…GDGIVFDWEP (85 aa). The tract at residues 491 to 512 is disordered; it reads GEAGLWADEDGTDEDASSDAKA. Acidic residues predominate over residues 497–512; the sequence is ADEDGTDEDASSDAKA.

This sequence belongs to the TRAFAC class OBG-HflX-like GTPase superfamily. OBG GTPase family. Monomer. It depends on Mg(2+) as a cofactor.

It is found in the cytoplasm. Its function is as follows. An essential GTPase which binds GTP, GDP and possibly (p)ppGpp with moderate affinity, with high nucleotide exchange rates and a fairly low GTP hydrolysis rate. Plays a role in control of the cell cycle, stress response, ribosome biogenesis and in those bacteria that undergo differentiation, in morphogenesis control. The protein is GTPase Obg of Clavibacter michiganensis subsp. michiganensis (strain NCPPB 382).